A 436-amino-acid polypeptide reads, in one-letter code: MAMNFVTFNQDYSYLAVGSVSPPSATSKGFRIFTTDPFAKSYETKEGNIAIIEMLFSTSLVALILSPRRLQITNTKRQSTICELTFPTTVLAVRLNRKRLVIVLEDQIYLYDIQTMKLLYTIQTSPNPNAICALSPSSDNCYLAYPLPQKAPPSSFNPPSHTPPGTTHVSPTSGEVLIFDTLKLEAINVIEAHRSPLACITLNSDGTLLATASDKGTIIRVFSVPDGHKLYQFRRGSMPSRIFSMSFNTTSTLLCVSSSTETIHLFKLSHPTSSPDTSPSSPVGRDRSLSQSSSGYSPDRGDLTGDVGSSDFPARKHNGTLMGMIRRTSQNVGSTVAAKVGGYLPKGVSEMWEPTRDFAWFKLPKPSQTSGGSGNNGPLRSVVAMSSNTPQVMVVTSDGNFYVFSIDLSKGGEGTLTKQYSVLESNDRLGYSVTDY.

3 WD repeats span residues 192–232 (AHRS…KLYQ), 237–276 (SMPS…SSPD), and 374–414 (GNNG…GGEG). The L/FRRG motif motif lies at 233 to 237 (FRRGS). A disordered region spans residues 268–315 (LSHPTSSPDTSPSSPVGRDRSLSQSSSGYSPDRGDLTGDVGSSDFPAR). Residues 269 to 282 (SHPTSSPDTSPSSP) are compositionally biased toward low complexity.

It belongs to the WD repeat PROPPIN family. In terms of assembly, component of the PI(3,5)P2 regulatory complex.

The protein localises to the preautophagosomal structure membrane. The protein resides in the vacuole membrane. It localises to the endosome membrane. Its function is as follows. The PI(3,5)P2 regulatory complex regulates both the synthesis and turnover of phosphatidylinositol 3,5-bisphosphate (PtdIns(3,5)P2). Necessary for proper vacuole morphology. Plays an important role in osmotically-induced vacuole fragmentation. Required for cytoplasm to vacuole transport (Cvt) vesicle formation, pexophagy and starvation-induced autophagy. Involved in correct atg9 trafficking to the pre-autophagosomal structure. Might also be involved in premeiotic DNA replication. The chain is Autophagy-related protein 18 (atg18) from Aspergillus fumigatus (strain ATCC MYA-4609 / CBS 101355 / FGSC A1100 / Af293) (Neosartorya fumigata).